A 236-amino-acid polypeptide reads, in one-letter code: Probable glutathione S-transferase GSTU6 (236 aa).

The 80-residue stretch at 5 to 84 (GELKLLGVWS…YIDEVWPGGA (80 aa)) folds into the GST N-terminal domain. Residues S15, K42, V56, and 68–69 (ES) contribute to the glutathione site. The GST C-terminal domain occupies 94–228 (DPYERAVARF…KLLEFRQTLL (135 aa)).

This sequence belongs to the GST superfamily. Tau family. Expressed in seedling shoots and roots.

It catalyses the reaction RX + glutathione = an S-substituted glutathione + a halide anion + H(+). In terms of biological role, conjugation of reduced glutathione to a wide number of exogenous and endogenous hydrophobic electrophiles. The sequence is that of Probable glutathione S-transferase GSTU6 (GSTU6) from Oryza sativa subsp. japonica (Rice).